Here is a 434-residue protein sequence, read N- to C-terminus: Enolase (434 aa).

Residue glutamine 163 participates in (2R)-2-phosphoglycerate binding. Glutamate 205 functions as the Proton donor in the catalytic mechanism. Mg(2+) is bound by residues aspartate 242, glutamate 289, and aspartate 316. 4 residues coordinate (2R)-2-phosphoglycerate: lysine 341, arginine 370, serine 371, and lysine 392. Lysine 341 (proton acceptor) is an active-site residue.

It belongs to the enolase family. Requires Mg(2+) as cofactor.

Its subcellular location is the cytoplasm. The protein localises to the secreted. It localises to the cell surface. The catalysed reaction is (2R)-2-phosphoglycerate = phosphoenolpyruvate + H2O. The protein operates within carbohydrate degradation; glycolysis; pyruvate from D-glyceraldehyde 3-phosphate: step 4/5. Catalyzes the reversible conversion of 2-phosphoglycerate (2-PG) into phosphoenolpyruvate (PEP). It is essential for the degradation of carbohydrates via glycolysis. The protein is Enolase of Lacticaseibacillus casei (strain BL23) (Lactobacillus casei).